We begin with the raw amino-acid sequence, 163 residues long: NADH-quinone oxidoreductase subunit I (163 aa).

2 consecutive 4Fe-4S ferredoxin-type domains span residues 53 to 83 (LRRY…IEAG) and 94 to 123 (VRYD…EGPN). The [4Fe-4S] cluster site is built by Cys63, Cys66, Cys69, Cys73, Cys103, Cys106, Cys109, and Cys113.

The protein belongs to the complex I 23 kDa subunit family. NDH-1 is composed of 14 different subunits. Subunits NuoA, H, J, K, L, M, N constitute the membrane sector of the complex. The cofactor is [4Fe-4S] cluster.

The protein resides in the cell inner membrane. The catalysed reaction is a quinone + NADH + 5 H(+)(in) = a quinol + NAD(+) + 4 H(+)(out). Functionally, NDH-1 shuttles electrons from NADH, via FMN and iron-sulfur (Fe-S) centers, to quinones in the respiratory chain. The immediate electron acceptor for the enzyme in this species is believed to be ubiquinone. Couples the redox reaction to proton translocation (for every two electrons transferred, four hydrogen ions are translocated across the cytoplasmic membrane), and thus conserves the redox energy in a proton gradient. This chain is NADH-quinone oxidoreductase subunit I, found in Rhizobium johnstonii (strain DSM 114642 / LMG 32736 / 3841) (Rhizobium leguminosarum bv. viciae).